Here is a 158-residue protein sequence, read N- to C-terminus: Protein E6 (158 aa).

Zinc fingers lie at residues 32 to 68 and 105 to 141; these read CVYC…CQKC and CMSC…CRHC. Positions 156–158 match the PDZ-binding domain motif; it reads TQV.

It belongs to the papillomaviridae E6 protein family. As to quaternary structure, forms homodimers. Interacts with ubiquitin-protein ligase UBE3A/E6-AP and thus forms a complex with human TP53. Interacts with human NFX1 and MAGI3. Interacts with human IRF3; this interaction inhibits the establishment of antiviral state. Interacts with human TYK2; this interaction inhibits JAK-STAT activation by interferon alpha. Interacts with host DLG1; this interaction leads to the proteasomal degradation of DLG1.

The protein resides in the host cytoplasm. The protein localises to the host nucleus. In terms of biological role, plays a major role in the induction and maintenance of cellular transformation. Acts mainly as an oncoprotein by stimulating the destruction of many host cell key regulatory proteins. E6 associates with host UBE3A/E6-AP ubiquitin-protein ligase, and inactivates tumor suppressors TP53 and TP73 by targeting them to the 26S proteasome for degradation. In turn, DNA damage and chromosomal instabilities increase and lead to cell proliferation and cancer development. The complex E6/E6AP targets several other substrates to degradation via the proteasome including host DLG1 or NFX1, a repressor of human telomerase reverse transcriptase (hTERT). The resulting increased expression of hTERT prevents the shortening of telomere length leading to cell immortalization. Other cellular targets including BAK1, Fas-associated death domain-containing protein (FADD) and procaspase 8, are degraded by E6/E6AP causing inhibition of apoptosis. E6 also inhibits immune response by interacting with host IRF3 and TYK2. These interactions prevent IRF3 transcriptional activities and inhibit TYK2-mediated JAK-STAT activation by interferon alpha resulting in inhibition of the interferon signaling pathway. The protein is Protein E6 of Homo sapiens (Human).